The primary structure comprises 246 residues: 1-(5-phosphoribosyl)-5-[(5-phosphoribosylamino)methylideneamino] imidazole-4-carboxamide isomerase (246 aa).

Catalysis depends on Asp-8, which acts as the Proton acceptor. The active-site Proton donor is Asp-130.

This sequence belongs to the HisA/HisF family.

The protein localises to the cytoplasm. The catalysed reaction is 1-(5-phospho-beta-D-ribosyl)-5-[(5-phospho-beta-D-ribosylamino)methylideneamino]imidazole-4-carboxamide = 5-[(5-phospho-1-deoxy-D-ribulos-1-ylimino)methylamino]-1-(5-phospho-beta-D-ribosyl)imidazole-4-carboxamide. Its pathway is amino-acid biosynthesis; L-histidine biosynthesis; L-histidine from 5-phospho-alpha-D-ribose 1-diphosphate: step 4/9. This is 1-(5-phosphoribosyl)-5-[(5-phosphoribosylamino)methylideneamino] imidazole-4-carboxamide isomerase from Halorhodospira halophila (strain DSM 244 / SL1) (Ectothiorhodospira halophila (strain DSM 244 / SL1)).